The sequence spans 240 residues: FMN-dependent NADH:quinone oxidoreductase 2 (240 aa).

FMN contacts are provided by residues Ser-10 and 23–25; that span reads SIS.

This sequence belongs to the azoreductase type 1 family. As to quaternary structure, homodimer. FMN serves as cofactor.

It catalyses the reaction 2 a quinone + NADH + H(+) = 2 a 1,4-benzosemiquinone + NAD(+). The enzyme catalyses N,N-dimethyl-1,4-phenylenediamine + anthranilate + 2 NAD(+) = 2-(4-dimethylaminophenyl)diazenylbenzoate + 2 NADH + 2 H(+). In terms of biological role, quinone reductase that provides resistance to thiol-specific stress caused by electrophilic quinones. Also exhibits azoreductase activity. Catalyzes the reductive cleavage of the azo bond in aromatic azo compounds to the corresponding amines. The sequence is that of FMN-dependent NADH:quinone oxidoreductase 2 from Idiomarina loihiensis (strain ATCC BAA-735 / DSM 15497 / L2-TR).